We begin with the raw amino-acid sequence, 238 residues long: Uridylate kinase (238 aa).

ATP is bound at residue 12–15; sequence KLSG. Gly-54 lines the UMP pocket. ATP is bound by residues Gly-55 and Arg-59. Residues Asp-74 and 135–142 contribute to the UMP site; that span reads TGNPYFTT. ATP is bound by residues Thr-162, Asn-163, Tyr-168, and Asp-171.

Belongs to the UMP kinase family. In terms of assembly, homohexamer.

It is found in the cytoplasm. It carries out the reaction UMP + ATP = UDP + ADP. It functions in the pathway pyrimidine metabolism; CTP biosynthesis via de novo pathway; UDP from UMP (UMPK route): step 1/1. Inhibited by UTP. In terms of biological role, catalyzes the reversible phosphorylation of UMP to UDP. The protein is Uridylate kinase of Bradyrhizobium sp. (strain ORS 278).